Consider the following 1711-residue polypeptide: Protein chiffon (1711 aa).

Disordered stretches follow at residues 1–31, 87–129, and 244–307; these read MQPQ…AATP, KPEV…SRAD, and TKSK…IDSS. The interval 1–400 is sufficient for interaction with and activation of Cdc7; that stretch reads MQPQSDKQSA…PALREKSKRI (400 aa). Composition is skewed to low complexity over residues 10 to 30 and 97 to 109; these read ASRL…TAAT and TPGT…TPTS. Phosphoserine is present on residues Ser-306 and Ser-307. The segment at 307–356 adopts a DBF4-type zinc-finger fold; the sequence is SEKQGGVCEICKLEYDILNIHLQSKDHELFAKNSDNFLALDTLIQSSADV. Residues Cys-314, Cys-317, His-327, and His-333 each coordinate Zn(2+). Acidic residues predominate over residues 365–378; sequence VESELDMDVDESLS. Disordered stretches follow at residues 365 to 507, 531 to 647, 733 to 771, 791 to 817, 908 to 945, 1005 to 1025, 1055 to 1157, 1271 to 1290, 1303 to 1329, 1343 to 1370, and 1383 to 1644; these read VESE…DSPS, MFPR…KPQL, LDEE…REQR, TEVK…KVKQ, QDKG…YKNK, RSTS…CRNK, QRQD…RNQS, ESEG…PPTD, MGSA…RMSN, LKSN…ALPD, and LHPI…SKYA. Residues Ser-406, Ser-407, Ser-417, Ser-432, and Ser-435 each carry the phosphoserine modification. Positions 429-439 are enriched in polar residues; the sequence is QGNSPGSLSEL. Residues 445-454 are compositionally biased toward low complexity; the sequence is PTTAAATPTT. A Phosphoserine modification is found at Ser-467. The segment at residues 493 to 505 is a DNA-binding region (a.T hook); the sequence is PRGRGRPPNQVDS. Polar residues predominate over residues 537 to 546; that stretch reads VPTTRSSSEL. Residues Ser-542, Ser-543, and Ser-544 each carry the phosphoserine modification. The span at 549–560 shows a compositional bias: basic and acidic residues; sequence DVDRQTTSDVRG. A compositionally biased stretch (low complexity) spans 563-575; it reads SISSASLDTSTSE. Over residues 588 to 601 the composition is skewed to basic residues; that stretch reads IRKRAQAVGRRRKV. Positions 793–812 are enriched in polar residues; the sequence is VKTSPSKSRTKIQKPSSPTK. The span at 908 to 932 shows a compositional bias: basic and acidic residues; sequence QDKGEQIKLEDQKPAPKKEVKKEEE. The segment covering 1006–1018 has biased composition (low complexity); the sequence is STSSSSCSNSQRS. Thr-1081 bears the Phosphothreonine mark. Ser-1091 and Ser-1092 each carry phosphoserine. Residues 1092 to 1101 show a composition bias toward polar residues; sequence SPRTTRSQAA. The span at 1398 to 1407 shows a compositional bias: low complexity; that stretch reads TTTTTTTTTT. The tract at residues 1400-1695 is sufficient for interaction with Gcn5; sequence TTTTTTTTSA…NAWRRTQRRA (296 aa). Residues 1435–1445 show a composition bias toward basic and acidic residues; it reads ADDKQNSREDA. Composition is skewed to acidic residues over residues 1453–1475 and 1483–1518; these read DVDE…DETM and QDVE…EEQD. Composition is skewed to polar residues over residues 1536 to 1545 and 1556 to 1591; these read ISVTTPPEDS and HNGQ…SCIS.

As to quaternary structure, component of the Dbf4-dependent kinase (DDK) complex consisting of Cdc7 and the Dbf4 ortholog chif. Interacts with Cdc7; the interaction is direct. Interacts with CG5790. Component of the Chiffon histone acetyltransferase (CHAT) complex consisting of Ada3, Sgf29, Gcn5, chif/chiffon and Ada2b (Isoform A). Interacts (via C-terminus) with Gcn5; the interaction is direct but weak in the absence of other CHAT components. May be proteolytically cleaved to produce a N-terminal 50 kDa product.

The protein resides in the nucleus. In terms of biological role, a bicistronic gene producing two proteins that are components of different complexes and have separate properties and functions. Full-length protein is proteolytically cleaved, producing a ~50kDa N-terminal product (Chiffon-A) that forms part of the DDK complex; it is unclear if the C-terminal proteolytic product is stable or functional. Alternative initiation from an internal ribosome entry site produces a C-terminal ~48kDa product (Chiffon-B or Isoform E) that forms part of the CHAT complex. Involved in regulation of gene expression during embryonic development. Functionally, regulatory component of the Dbf4-dependent kinase (DDK) complex. Required for the amplification stage, but not the preceding endoreplication stage of DNA replication in egg chamber follicle cells of the ovary. May be involved in initiation of DNA replication; activation of the chorion gene origins. May have a role in eye and thoracic bristle development. Required for female fertility; is not required for oogenesis but is required maternally for early embryo development. Its function is as follows. Component of the CHAT histone acetyltransferase complex, which predominantly acetylates histone H3. As part of the CHAT complex involved in acetylation of histone H3 on 'Lys-10' (H3K9ac), 'Lys-15' (H3K14ac) and 'Lys-19' (H3K18ac), but not 'Lys-25' (H3K24ac). May also regulate other histone acetyltransferase complexes. Essential for viability. Not required for early stages of embryonic development. May be involved in zygotic genome activation during embryogenesis. This chain is Protein chiffon, found in Drosophila melanogaster (Fruit fly).